The sequence spans 243 residues: MTKLAQLKLYATRPHPCSYLDDQEATTVFIDPNATIDASLYSELSAYGFRRSGSHVYRPHCEQCQACIPIRVCADSFTPNRSQKRCLKLNADLVVSEHDSIDNEECFSLYERYINERHSDGDMYPADKTQYRDFLTSEWGITRFLLFRDAQQSLLAVAVVDRLENGLSAVYTFFDPDAEKRSLGRFAILYQLEQAKQQQLPYLYLGYWIRACTKMNYKTDYQPYQMLINQNWVNIDVSSVIKR.

It belongs to the R-transferase family. Bpt subfamily.

Its subcellular location is the cytoplasm. The enzyme catalyses N-terminal L-glutamyl-[protein] + L-leucyl-tRNA(Leu) = N-terminal L-leucyl-L-glutamyl-[protein] + tRNA(Leu) + H(+). It carries out the reaction N-terminal L-aspartyl-[protein] + L-leucyl-tRNA(Leu) = N-terminal L-leucyl-L-aspartyl-[protein] + tRNA(Leu) + H(+). Functionally, functions in the N-end rule pathway of protein degradation where it conjugates Leu from its aminoacyl-tRNA to the N-termini of proteins containing an N-terminal aspartate or glutamate. The chain is Aspartate/glutamate leucyltransferase from Teredinibacter turnerae (strain ATCC 39867 / T7901).